A 331-amino-acid polypeptide reads, in one-letter code: Cytosolic arginine sensor for mTORC1 subunit 1 (331 aa).

Serine 14 is subject to Phosphoserine. One can recognise an ACT 1 domain in the interval 72–139; sequence AEATWLVMNV…SVVIHTLARE (68 aa). 110-111 provides a ligand contact to L-arginine; sequence SV. The segment at 155–174 is disordered; the sequence is GDDSSNGFPQAQHGPSPTVH. Residues 156 to 174 show a composition bias toward polar residues; sequence DDSSNGFPQAQHGPSPTVH. The 61-residue stretch at 262–322 folds into the ACT 2 domain; the sequence is WRMVRIGGQP…SCVIDILQRR (61 aa). Residues glycine 273, 279–280, and 299–303 contribute to the L-arginine site; these read IV and TFNFD.

The protein belongs to the GATS family. In terms of assembly, forms homodimers and heterodimers with CASTOR2. Interacts with the GATOR2 complex which is composed of MIOS, SEC13, SEH1L, WDR24 and WDR59; the interaction is negatively regulated by arginine. Interacts with TM4SF5; the interaction is positively regulated by leucine and is negatively regulated by arginine. In terms of processing, phosphorylation at Ser-14 by AKT1, promoting the interaction between CASTOR1 and RNF167. Ubiquitinated by RNF167 via 'Lys-29'-polyubiquitination, leading to its degradation, releasing the GATOR2 complex. Ubiquitination by RNF167 is promoted by phosphorylation at Ser-14 by AKT1.

It localises to the cytoplasm. Its subcellular location is the cytosol. Functionally, functions as an intracellular arginine sensor within the amino acid-sensing branch of the TORC1 signaling pathway. As a homodimer or a heterodimer with CASTOR2, binds and inhibits the GATOR subcomplex GATOR2 and thereby mTORC1. Binding of arginine to CASTOR1 allosterically disrupts the interaction of CASTOR1-containing dimers with GATOR2 which can in turn activate mTORC1 and the TORC1 signaling pathway. This Rattus norvegicus (Rat) protein is Cytosolic arginine sensor for mTORC1 subunit 1.